Here is a 77-residue protein sequence, read N- to C-terminus: Protein OPG128 (77 aa).

The protein belongs to the orthopoxvirus OPG128 family. In terms of assembly, interacts with sulfhydryl oxidase OPG072; this interaction involves formation of a transient disulfide-bonded intermediate, allowing disulfide bond transfer. Interacts with OPG088; this interaction involves formation of a transient disulfide-bonded intermediate, allowing disulfide bond transfer.

Its function is as follows. Late protein which probably participates in disulfide bond formation by functioning as a thiol-disulfide transfer protein between membrane-associated OPG072 and OPG08. The complete pathway for formation of disulfide bonds in intracellular virion membrane proteins sequentially involves oxidation of OPG072, OPG128 and OPG08. The chain is Protein OPG128 (OPG128) from Monkeypox virus.